Consider the following 108-residue polypeptide: Histone H4 (108 aa).

Residues 1-24 (MTGRGKGGKVLSLGGKGGKGAKRH) are disordered. Residues 17 to 21 (GGKGA) mediate DNA binding.

Belongs to the histone H4 family. In terms of assembly, the nucleosome is a histone octamer containing two molecules each of H2A, H2B, H3 and H4 assembled in one H3-H4 heterotetramer and two H2A-H2B heterodimers. The octamer wraps approximately 147 bp of DNA.

The protein localises to the nucleus. It is found in the chromosome. Functionally, core component of nucleosome. Nucleosomes wrap and compact DNA into chromatin, limiting DNA accessibility to the cellular machineries which require DNA as a template. Histones thereby play a central role in transcription regulation, DNA repair, DNA replication and chromosomal stability. DNA accessibility is regulated via a complex set of post-translational modifications of histones, also called histone code, and nucleosome remodeling. The sequence is that of Histone H4 from Mastigamoeba balamuthi (Phreatamoeba balamuthi).